Consider the following 432-residue polypeptide: Mitochondrial distribution and morphology protein 12 (432 aa).

An SMP-LTD domain is found at 1–432; it reads MSIEVDWRAA…VFPSFWTFLI (432 aa). Disordered regions lie at residues 182 to 273 and 354 to 377; these read WTDP…PRMR and QQEA…PKRQ. The segment covering 214–234 has biased composition (low complexity); the sequence is TSNPTSRPSTSSTLPSHPSAS. Composition is skewed to basic and acidic residues over residues 243-253 and 355-364; these read TGKEHGSLAED and QEARGQDDRP.

Belongs to the MDM12 family. As to quaternary structure, component of the ER-mitochondria encounter structure (ERMES) or MDM complex, composed of mmm1, mdm10, mdm12 and mdm34. A mmm1 homodimer associates with one molecule of mdm12 on each side in a pairwise head-to-tail manner, and the SMP-LTD domains of mmm1 and mdm12 generate a continuous hydrophobic tunnel for phospholipid trafficking.

The protein localises to the mitochondrion outer membrane. Its subcellular location is the endoplasmic reticulum membrane. Its function is as follows. Component of the ERMES/MDM complex, which serves as a molecular tether to connect the endoplasmic reticulum (ER) and mitochondria. Components of this complex are involved in the control of mitochondrial shape and protein biogenesis, and function in nonvesicular lipid trafficking between the ER and mitochondria. Mdm12 is required for the interaction of the ER-resident membrane protein mmm1 and the outer mitochondrial membrane-resident beta-barrel protein mdm10. The mdm12-mmm1 subcomplex functions in the major beta-barrel assembly pathway that is responsible for biogenesis of all mitochondrial outer membrane beta-barrel proteins, and acts in a late step after the SAM complex. The mdm10-mdm12-mmm1 subcomplex further acts in the TOM40-specific pathway after the action of the mdm12-mmm1 complex. Essential for establishing and maintaining the structure of mitochondria and maintenance of mtDNA nucleoids. The chain is Mitochondrial distribution and morphology protein 12 from Aspergillus oryzae (strain ATCC 42149 / RIB 40) (Yellow koji mold).